A 110-amino-acid chain; its full sequence is Inner kinetochore subunit mhf1 (110 aa).

The protein belongs to the TAF9 family. CENP-S/MHF1 subfamily. As to quaternary structure, the MHF histone-fold complex is a heterotetramer of 2 mhf1-mhf2 heterodimers. Component of the inner kinetochore constitutive centromere-associated network (CCAN) (also known as central kinetochore Sim4 complex in fission yeast), which is composed of at least cnl2, cnp3, cnp20, fta1, fta2, fta3, fta4, fta6, fta7, mal2, mhf1, mhf2, mis6, mis15, mis17, sim4 and wip1.

Its subcellular location is the nucleus. In terms of biological role, component of a FANCM-MHF complex that promotes gene conversion at blocked replication forks, probably by reversal of the stalled fork. FANCM-MHF promotes non-crossover recombination. This chain is Inner kinetochore subunit mhf1, found in Schizosaccharomyces pombe (strain 972 / ATCC 24843) (Fission yeast).